Here is a 404-residue protein sequence, read N- to C-terminus: MEPLDRELDEAELDLPSEPMLLNMGPSHPAMHGTVRIVLELSGETINKADVQIGYLHRGFEKMCERGTWSQVFPYVDRLNYVSPMLNNVGFALAVEKMLGVTVPERCQYYRVILGELARICDHMICSGAMSMELGAFTPFLYLCRAREIFWEIFEEETGARLTHSFGRVGGMARPPTADFKAMVRVGLARVLALVNDAEKLILKNRIFLDRLDGVGQISQEDALALGWTGVVLRATGVPYDVRRANPYMVYDRFEFDVPVGTRGDNYDRFMCRQEEIRQAGRIIEQALEQMPDEGPINIDDPRIVLPPKEEVYTTIEATIQHFKIVMEGIKVPAGECYSYTEAGNGELGFYLVSDGSGTPYRVRIRPPCFATTQGLSQLITGLMIPDVVPTFGSLNMIGGECDH.

This sequence belongs to the complex I 49 kDa subunit family. As to quaternary structure, NDH-1 is composed of 14 different subunits. Subunits NuoB, C, D, E, F, and G constitute the peripheral sector of the complex.

It is found in the cell inner membrane. It catalyses the reaction a quinone + NADH + 5 H(+)(in) = a quinol + NAD(+) + 4 H(+)(out). In terms of biological role, NDH-1 shuttles electrons from NADH, via FMN and iron-sulfur (Fe-S) centers, to quinones in the respiratory chain. The immediate electron acceptor for the enzyme in this species is believed to be ubiquinone. Couples the redox reaction to proton translocation (for every two electrons transferred, four hydrogen ions are translocated across the cytoplasmic membrane), and thus conserves the redox energy in a proton gradient. The sequence is that of NADH-quinone oxidoreductase subunit D 1 from Sorangium cellulosum (strain So ce56) (Polyangium cellulosum (strain So ce56)).